The primary structure comprises 523 residues: Coatomer subunit delta-2 (523 aa).

The segment at 218-243 (DSFASKPKGRPSAAATAPGKGLGMKL) is disordered. The 242-residue stretch at 282-523 (SDPVTVTIEE…RLVTANYQVV (242 aa)) folds into the MHD domain.

This sequence belongs to the adaptor complexes medium subunit family. Delta-COP subfamily. In terms of assembly, oligomeric complex that consists of at least the alpha, beta, beta', gamma, delta, epsilon and zeta subunits.

It is found in the cytoplasm. It localises to the golgi apparatus membrane. The protein localises to the cytoplasmic vesicle. Its subcellular location is the COPI-coated vesicle membrane. Functionally, the coatomer is a cytosolic protein complex that binds to dilysine motifs and reversibly associates with Golgi non-clathrin-coated vesicles, which further mediate biosynthetic protein transport from the ER, via the Golgi up to the trans Golgi network. Coatomer complex is required for budding from Golgi membranes, and is essential for the retrograde Golgi-to-ER transport of dilysine-tagged proteins. The sequence is that of Coatomer subunit delta-2 from Oryza sativa subsp. japonica (Rice).